A 580-amino-acid chain; its full sequence is E3 ubiquitin-protein ligase TRIM45 (580 aa).

The RING-type zinc finger occupies 29–98 (CPTCLRLFKV…QIGILCPVCD (70 aa)). 2 B box-type zinc fingers span residues 130 to 176 (GQGL…MVDL) and 186 to 227 (GKPI…YDFT). Residues C135, C138, C158, H162, C191, H194, C214, and H219 each contribute to the Zn(2+) site. Residues 249-329 (VEALEDALAQ…LLADMRTGVE (81 aa)) adopt a coiled-coil conformation. Residues 394–497 (TQEVDPAQCV…VQGSPFNVTV (104 aa)) form a Filamin repeat.

This sequence belongs to the TRIM/RBCC family.

It is found in the cytoplasm. The protein localises to the nucleus. The catalysed reaction is S-ubiquitinyl-[E2 ubiquitin-conjugating enzyme]-L-cysteine + [acceptor protein]-L-lysine = [E2 ubiquitin-conjugating enzyme]-L-cysteine + N(6)-ubiquitinyl-[acceptor protein]-L-lysine.. In terms of biological role, E3 ubiquitin-protein ligase that plays a role in the regulation of inflammatory response. Mechanistically, mediates the 'Lys-48'-linked polyubiquitination of TAB2, a regulatory protein of the kinase TAK1, leading to its degradation via the proteasomal pathway and inhibition of the TLR-mediated inflammatory immune response. May act as a transcriptional repressor in mitogen-activated protein kinase signaling pathway. In Mus musculus (Mouse), this protein is E3 ubiquitin-protein ligase TRIM45 (Trim45).